The sequence spans 277 residues: MAIKKYKPTSNGRRGMTSSDFAEITTDQPEKSLLAPLHKKGGRNNQGKLTVRHQGGGHKRQYRIIDFKRDKDGIPGRVATVEYDPNRSANIALINYVDGEKRYILAPKGLQVGTEIMSGPEADIKVGNALPLINIPVGTVVHNIELKPGKGGQLVRSAGTSAQVLGKEGKYVLVRLNSGEVRMILSACRATIGQVGNEQHELINIGKAGRSRWKGVRPTVRGSVMNPNDHPHGGGEGRAPIGRKSPMSPWGKPTLGFKTRKKKNKSDKFIVRRRKNK.

Disordered stretches follow at residues 1–23 (MAIKKYKPTSNGRRGMTSSDFAE), 36–58 (PLHKKGGRNNQGKLTVRHQGGGH), and 219–277 (TVRG…RKNK). Residues 8–20 (PTSNGRRGMTSSD) are compositionally biased toward polar residues. Positions 258 to 277 (KTRKKKNKSDKFIVRRRKNK) are enriched in basic residues.

It belongs to the universal ribosomal protein uL2 family. Part of the 50S ribosomal subunit. Forms a bridge to the 30S subunit in the 70S ribosome.

One of the primary rRNA binding proteins. Required for association of the 30S and 50S subunits to form the 70S ribosome, for tRNA binding and peptide bond formation. It has been suggested to have peptidyltransferase activity; this is somewhat controversial. Makes several contacts with the 16S rRNA in the 70S ribosome. The protein is Large ribosomal subunit protein uL2 of Bacillus licheniformis (strain ATCC 14580 / DSM 13 / JCM 2505 / CCUG 7422 / NBRC 12200 / NCIMB 9375 / NCTC 10341 / NRRL NRS-1264 / Gibson 46).